The chain runs to 410 residues: Mating-type locus allele B4 protein (410 aa).

Residues 1–110 (MSSDPKISIT…ANASSPVVGC (110 aa)) are variable domain between B alleles. A DNA-binding region (homeobox; TALE-type) is located at residues 107–184 (VVGCRELSED…NARRRSGWSH (78 aa)). A highly conserved between B alleles region spans residues 111-410 (RELSEDLPAY…PFLCLSVAFV (300 aa)). 3 disordered regions span residues 202-241 (RAKL…TPAD), 278-335 (TPKP…TPEL), and 375-394 (RGNR…QPDE). Low complexity predominate over residues 206-222 (SSSNQSTPPSPTSEYPS). The Nuclear localization signal signature appears at 276–308 (KKTPKPGMPRPVTTVAKRQPARKTKPAAKPKSR). Basic residues predominate over residues 294–307 (QPARKTKPAAKPKS). Positions 312–335 (PRASTTPSIDSTLDSSKLESTPEL) are enriched in polar residues. The tract at residues 333–410 (PELSMCSTAD…PFLCLSVAFV (78 aa)) is not essential for B4 function. Basic residues predominate over residues 375-388 (RGNRKVKALPKRAG).

Belongs to the TALE/M-ATYP homeobox family.

Its subcellular location is the nucleus. Functionally, the B locus has at least 25 alleles, and any combination of two different B alleles yields a multimeric regulatory protein, that activates genes responsible for the pathogenicity and for the sexual development of the fungus within the corn plant. The chain is Mating-type locus allele B4 protein from Mycosarcoma maydis (Corn smut fungus).